Consider the following 126-residue polypeptide: Fluoride-specific ion channel FluC (126 aa).

Helical transmembrane passes span 6–26 (FVAVGVGAAAGAWLRWGFAVL), 36–56 (YGTLAANLLGGYLVGLAVGFF), 69–89 (LAITGFLGGLTTFSTFSSEVV), and 99–119 (WAGLHLLLHLGGSLLLTAFGL). G76 and T79 together coordinate Na(+).

Belongs to the fluoride channel Fluc/FEX (TC 1.A.43) family.

The protein localises to the cell inner membrane. The catalysed reaction is fluoride(in) = fluoride(out). Its activity is regulated as follows. Na(+) is not transported, but it plays an essential structural role and its presence is essential for fluoride channel function. Functionally, fluoride-specific ion channel. Important for reducing fluoride concentration in the cell, thus reducing its toxicity. The protein is Fluoride-specific ion channel FluC of Cupriavidus necator (strain ATCC 17699 / DSM 428 / KCTC 22496 / NCIMB 10442 / H16 / Stanier 337) (Ralstonia eutropha).